We begin with the raw amino-acid sequence, 208 residues long: Protein THEM6 (208 aa).

The first 17 residues, 1-17, serve as a signal peptide directing secretion; the sequence is MLGLLVALLALGLAVFA. The residue at position 199 (serine 199) is a Phosphoserine.

This sequence belongs to the THEM6 family.

It localises to the secreted. The sequence is that of Protein THEM6 (THEM6) from Homo sapiens (Human).